The primary structure comprises 701 residues: Elongation factor G 2 (701 aa).

The tr-type G domain maps to 8–290 (NRYRNIGIVA…AVIEFLPAPA (283 aa)). GTP-binding positions include 17-24 (AHVDAGKT), 88-92 (DTPGH), and 142-145 (NKMD).

Belongs to the TRAFAC class translation factor GTPase superfamily. Classic translation factor GTPase family. EF-G/EF-2 subfamily.

It localises to the cytoplasm. Functionally, catalyzes the GTP-dependent ribosomal translocation step during translation elongation. During this step, the ribosome changes from the pre-translocational (PRE) to the post-translocational (POST) state as the newly formed A-site-bound peptidyl-tRNA and P-site-bound deacylated tRNA move to the P and E sites, respectively. Catalyzes the coordinated movement of the two tRNA molecules, the mRNA and conformational changes in the ribosome. The chain is Elongation factor G 2 from Pseudoalteromonas atlantica (strain T6c / ATCC BAA-1087).